Consider the following 240-residue polypeptide: MGRAFEYRRAAKEKRWDKMSKVFPKLAKAITLAAKDGGGDPDTNAKLRTAILNAKAQNMPKDNIDAAIKRASSKEGNLSETTYEGKANFGVLIIMECMTDNPTRTVANLKSYFNKTQGASIVPNGSLEFMFNRKSVFECLKNEVENLKLSLEDLEFALIDYGLEELEEVGDKIIIRGDYNSFKLLNEGFESLKLPILKASLQRIATTPIELNDEQMELTEKLLDKIEDDDDVVALYTNIE.

Belongs to the TACO1 family.

Its subcellular location is the cytoplasm. The protein is Probable transcriptional regulatory protein Hac_0344 of Helicobacter acinonychis (strain Sheeba).